A 131-amino-acid chain; its full sequence is Small ribosomal subunit protein uS12 (131 aa).

At D89 the chain carries 3-methylthioaspartic acid.

Belongs to the universal ribosomal protein uS12 family. Part of the 30S ribosomal subunit. Contacts proteins S8 and S17. May interact with IF1 in the 30S initiation complex.

Its function is as follows. With S4 and S5 plays an important role in translational accuracy. In terms of biological role, interacts with and stabilizes bases of the 16S rRNA that are involved in tRNA selection in the A site and with the mRNA backbone. Located at the interface of the 30S and 50S subunits, it traverses the body of the 30S subunit contacting proteins on the other side and probably holding the rRNA structure together. The combined cluster of proteins S8, S12 and S17 appears to hold together the shoulder and platform of the 30S subunit. The protein is Small ribosomal subunit protein uS12 of Karelsulcia muelleri (strain GWSS) (Sulcia muelleri).